The following is a 160-amino-acid chain: Cytochrome c-type biogenesis protein CcmE (160 aa).

Topologically, residues 1 to 8 (MSAPRKTR) are cytoplasmic. The helical; Signal-anchor for type II membrane protein transmembrane segment at 9 to 29 (LYAILAVVCGAVLTIALMLYA) threads the bilayer. The Periplasmic portion of the chain corresponds to 30–160 (LSSNIDLFYT…PAAGPEGKRL (131 aa)). Residues His-130 and Tyr-134 each coordinate heme.

The protein belongs to the CcmE/CycJ family.

Its subcellular location is the cell inner membrane. Functionally, heme chaperone required for the biogenesis of c-type cytochromes. Transiently binds heme delivered by CcmC and transfers the heme to apo-cytochromes in a process facilitated by CcmF and CcmH. The sequence is that of Cytochrome c-type biogenesis protein CcmE from Pectobacterium atrosepticum (strain SCRI 1043 / ATCC BAA-672) (Erwinia carotovora subsp. atroseptica).